We begin with the raw amino-acid sequence, 132 residues long: L-ectoine synthase (132 aa).

It belongs to the ectoine synthase family.

It catalyses the reaction (2S)-4-acetamido-2-aminobutanoate = L-ectoine + H2O. The protein operates within amine and polyamine biosynthesis; ectoine biosynthesis; L-ectoine from L-aspartate 4-semialdehyde: step 3/3. Its function is as follows. Catalyzes the circularization of gamma-N-acetyl-alpha,gamma-diaminobutyric acid (ADABA) to ectoine (1,4,5,6-tetrahydro-2-methyl-4-pyrimidine carboxylic acid), which is an excellent osmoprotectant. The protein is L-ectoine synthase of Rhodococcus opacus (strain B4).